The primary structure comprises 383 residues: Homeobox protein SHOOT MERISTEMLESS (383 aa).

The interval 37 to 58 (HQQHHGHDQQHQHQQQHDGYAY) is disordered. The ELK domain maps to 263 to 283 (ELKGQLLRKYSGYLGSLKQEF). Positions 284 to 347 (MKKRKKGKLP…NQRKRHWKPS (64 aa)) form a DNA-binding region, homeobox; TALE-type.

The protein belongs to the TALE/KNOX homeobox family.

The protein resides in the nucleus. Required for shoot apical meristem formation during embryogenesis. Probably binds to the DNA sequence 5'-TGAC-3'. This is Homeobox protein SHOOT MERISTEMLESS (STM) from Brassica oleracea (Wild cabbage).